The following is a 1037-amino-acid chain: Caspase recruitment domain-containing protein 6 (1037 aa).

Position 2 is an N-acetylalanine (Ala-2). Residues 3–94 (TESTPSEIIE…QSAAICGLRH (92 aa)) enclose the CARD domain. Residue Ser-154 is modified to Phosphoserine. 3 disordered regions span residues 235 to 270 (DPEH…TSLS), 669 to 704 (VSSG…PIQE), and 887 to 1037 (RTSH…GGKH). Residues 242–261 (DGEEDFENSETTEFSGEEPS) show a composition bias toward acidic residues. The span at 690–699 (LKSSSKSQAL) shows a compositional bias: low complexity. Composition is skewed to polar residues over residues 911–928 (ASQQ…SNPA), 938–954 (KSSQ…TVKH), and 963–984 (VPSQ…QTKP). Residue Ser-985 is modified to Phosphoserine. Pro residues predominate over residues 994–1012 (PSQPWPPQSKPSQPRPPQP). Basic residues predominate over residues 1023-1037 (KAHHSKAGQKRGGKH).

Its function is as follows. May be involved in apoptosis. This Homo sapiens (Human) protein is Caspase recruitment domain-containing protein 6 (CARD6).